We begin with the raw amino-acid sequence, 78 residues long: Acyl carrier protein (78 aa).

Positions 2–77 (DELFLRMRAL…DAYEFIKSKV (76 aa)) constitute a Carrier domain. S37 carries the post-translational modification O-(pantetheine 4'-phosphoryl)serine.

It belongs to the acyl carrier protein (ACP) family. In terms of processing, 4'-phosphopantetheine is transferred from CoA to a specific serine of apo-ACP by AcpS. This modification is essential for activity because fatty acids are bound in thioester linkage to the sulfhydryl of the prosthetic group.

The protein localises to the cytoplasm. Its pathway is lipid metabolism; fatty acid biosynthesis. Its function is as follows. Carrier of the growing fatty acid chain in fatty acid biosynthesis. This chain is Acyl carrier protein, found in Treponema pallidum (strain Nichols).